The primary structure comprises 874 residues: Bifunctional uridylyltransferase/uridylyl-removing enzyme (874 aa).

The interval 1 to 336 (MIDTSTITNP…DNGKTVETIQ (336 aa)) is uridylyltransferase. The uridylyl-removing stretch occupies residues 337–695 (LSDDFQIRGH…LSKKATRGGT (359 aa)). Residues 455 to 577 (VDEHSVRLIK…VRDEERLDYL (123 aa)) form the HD domain. 2 ACT domains span residues 696 to 779 (EVFV…RAPR) and 802 to 874 (TMEL…TPQD).

It belongs to the GlnD family. It depends on Mg(2+) as a cofactor.

The enzyme catalyses [protein-PII]-L-tyrosine + UTP = [protein-PII]-uridylyl-L-tyrosine + diphosphate. It catalyses the reaction [protein-PII]-uridylyl-L-tyrosine + H2O = [protein-PII]-L-tyrosine + UMP + H(+). Its activity is regulated as follows. Uridylyltransferase (UTase) activity is inhibited by glutamine, while glutamine activates uridylyl-removing (UR) activity. Its function is as follows. Modifies, by uridylylation and deuridylylation, the PII regulatory proteins (GlnB and homologs), in response to the nitrogen status of the cell that GlnD senses through the glutamine level. Under low glutamine levels, catalyzes the conversion of the PII proteins and UTP to PII-UMP and PPi, while under higher glutamine levels, GlnD hydrolyzes PII-UMP to PII and UMP (deuridylylation). Thus, controls uridylylation state and activity of the PII proteins, and plays an important role in the regulation of nitrogen assimilation and metabolism. This is Bifunctional uridylyltransferase/uridylyl-removing enzyme from Photobacterium profundum (strain SS9).